A 176-amino-acid chain; its full sequence is MFPMVTGFMNYGQQTIRAARYIGQSFMTTLSHVNRLPVTIQYPYEKLITSERFRGRIHFEFDKCIACEVCVRVCPIDLPVVDWELETNIRKKRLLNYSIDFGICIFCGNCVEYCPTNCLSMTEEYELSTYNRHELNYNQIALGRLPMSVIDDYTIRTILNSPQSLIKMGKPPLIKD.

4Fe-4S ferredoxin-type domains are found at residues 55 to 84 (GRIH…VDWE) and 95 to 124 (LNYS…MTEE). Residues Cys64, Cys67, Cys70, Cys74, Cys104, Cys107, Cys110, and Cys114 each contribute to the [4Fe-4S] cluster site.

This sequence belongs to the complex I 23 kDa subunit family. NDH is composed of at least 16 different subunits, 5 of which are encoded in the nucleus. [4Fe-4S] cluster is required as a cofactor.

The protein resides in the plastid. It localises to the chloroplast thylakoid membrane. It catalyses the reaction a plastoquinone + NADH + (n+1) H(+)(in) = a plastoquinol + NAD(+) + n H(+)(out). It carries out the reaction a plastoquinone + NADPH + (n+1) H(+)(in) = a plastoquinol + NADP(+) + n H(+)(out). NDH shuttles electrons from NAD(P)H:plastoquinone, via FMN and iron-sulfur (Fe-S) centers, to quinones in the photosynthetic chain and possibly in a chloroplast respiratory chain. The immediate electron acceptor for the enzyme in this species is believed to be plastoquinone. Couples the redox reaction to proton translocation, and thus conserves the redox energy in a proton gradient. The protein is NAD(P)H-quinone oxidoreductase subunit I, chloroplastic of Populus alba (White poplar).